The following is a 649-amino-acid chain: Protein mitoshell (649 aa).

A compositionally biased stretch (basic and acidic residues) spans 167–176 (LRSEARKPRP). Disordered regions lie at residues 167 to 193 (LRSE…ESGA), 389 to 414 (HGPS…EPTS), and 485 to 512 (ALPS…VRSY). Positions 177 to 191 (ESVVPEESSISSLES) are enriched in low complexity. 2 stretches are compositionally biased toward polar residues: residues 393-414 (AFST…EPTS) and 485-503 (ALPS…SPQS).

Functionally, required for male meiotic cytokinesis through its involvement in the regulation of mitochondrial aggregation and fusion, astral spindle assembly and contractile ring formation. This is Protein mitoshell from Drosophila melanogaster (Fruit fly).